A 138-amino-acid polypeptide reads, in one-letter code: Secreted RxLR effector protein 51 (138 aa).

Positions 1–19 (MRSSTILFVLGVAMVAVNG) are cleaved as a signal peptide. The short motif at 38 to 53 (RLLRSNSGKHKTDEER) is the RxLR-dEER element. A glycan (N-linked (GlcNAc...) asparagine) is linked at N101.

It belongs to the RxLR effector family.

It is found in the secreted. The protein localises to the host nucleus. In terms of biological role, secreted effector that completely suppresses the host cell death induced by cell death-inducing proteins. The chain is Secreted RxLR effector protein 51 from Plasmopara viticola (Downy mildew of grapevine).